Here is a 344-residue protein sequence, read N- to C-terminus: Nuclear distribution protein nudE-like 1-B (344 aa).

Positions 26–189 (YKKSCHDAQE…ELAVRERTSD (164 aa)) form a coiled coil.

Belongs to the nudE family. Phosphorylated in mitosis.

The protein localises to the cytoplasm. Its subcellular location is the cytoskeleton. It localises to the microtubule organizing center. The protein resides in the centrosome. It is found in the spindle. Required for organization of the cellular microtubule array and microtubule anchoring at the centrosome. Positively regulates the activity of the minus-end directed microtubule motor protein dynein. May enhance dynein-mediated microtubule sliding by targeting dynein to the microtubule plus end. The protein is Nuclear distribution protein nudE-like 1-B (ndel1b) of Danio rerio (Zebrafish).